The chain runs to 264 residues: Electron transfer flavoprotein subunit beta (264 aa).

Residues Ala-6, 36-39 (NEWD), Val-64, 119-122 (GVQS), and 127-130 (YAST) contribute to the AMP site.

Heterodimer of an alpha and a beta subunit. Forms a ternary complex with trimethylamine dehydrogenase.

Heterodimeric electron transfer flavoprotein that accepts electrons from trimethylamine dehydrogenase. It transfers the electrons to the main respiratory chain via ETF-ubiquinone oxidoreductase (ETF dehydrogenase). EtfB binds an AMP molecule that probably has a purely structural role. In Methylophilus methylotrophus (Bacterium W3A1), this protein is Electron transfer flavoprotein subunit beta (etfB).